The sequence spans 69 residues: Photosystem I reaction center subunit IV (69 aa).

It belongs to the PsaE family.

Its subcellular location is the cellular thylakoid membrane. In terms of biological role, stabilizes the interaction between PsaC and the PSI core, assists the docking of the ferredoxin to PSI and interacts with ferredoxin-NADP oxidoreductase. This Prochlorococcus marinus (strain MIT 9215) protein is Photosystem I reaction center subunit IV.